A 945-amino-acid chain; its full sequence is Sensor kinase CckA (945 aa).

2 helical membrane passes run 111 to 131 (ALRLLIVGILLMGAAFIYFLF) and 139 to 159 (FALVLMGVLSMVGVFYLFGAA). PAS domains lie at 171–212 (HQDL…TDAD), 313–341 (LDHAPAGFFSANPAGRIIYLNATLAEWLG), and 432–505 (AEVR…FAGQ). Positions 574–797 (GIAHDFNNVL…TFKIFLPRLI (224 aa)) constitute a Histidine kinase domain. Residue His577 is modified to Phosphohistidine; by autocatalysis. In terms of domain architecture, Response regulatory spans 825–941 (TVLLVEDEDA…QLATTVKEML (117 aa)). 4-aspartylphosphate is present on Asp876.

Its subcellular location is the cell inner membrane. It catalyses the reaction ATP + protein L-histidine = ADP + protein N-phospho-L-histidine.. Component of a regulatory phosphorelay system that controls B.abortus cell growth, division, and intracellular survival inside mammalian host cells. This signaling pathway is composed of CckA, ChpT, CtrA and CpdR. CckA autophosphorylates in the presence of ATP on a conserved His residue and transfers a phosphoryl group to a conserved Asp residue on its C-terminal receiver domain. CckA-P transfers phosphoryl groups to the ChpT phosphotransferase. This is Sensor kinase CckA from Brucella abortus (strain 2308).